The following is a 626-amino-acid chain: MSRFVTSVSALAMLALAPAALSSVAYANDKLVELSKSDDNWVMPGKNYDSNNYSELKQVNKSNVKQLRPAWTFSTGLLNGHEGAPLVVDGKMYVHTSFPNNTFALDLDDPGHILWQDKPKQNPAARAVACCDLVNRGLAYWPGDGKTPALILKTQLDRHVVALNAETGETVWKVENSDIKVGSTLTIAPYVVKDKVIIGSSGAELGVRGYLTAYDVKTGGQVWRAYATGPDKDLLLADDFNVKNAHYGQKGLGTATWEGDAWKIGGGTNWGWYAYDPGTNLIYFGTGNPAPWNETMRPGDNKWTMTIFGRDADTGEAKFGYQKTPHDEWDYAGVNVMMPSEQKDKDGKTRKLLTHPDRNGIVYTLDRTDGALVSANKLDDTVNVFKTVDLKTGQPVRDPEYGTRMDHLAKDVCPSAMGYHNQGHDSYDPKRELFFMGINHICMDWEPFMLPYRAGQFFVGATLNMYPGPKGDRQNYEGLGQIKAYNAITGSYKWEKMERFAVWGGTLATAGDLVFYGTLDGYLKARDSDTGDLLWKFKIPSGAIGYPMTYTHKGTQYVAIYYGVGGWPGVGLVFDLADPTAGLGAVGAFKKLANYTQQGGGVIVFSLDGKGPYDDPNVGEWKSASK.

The signal sequence occupies residues 1–27 (MSRFVTSVSALAMLALAPAALSSVAYA). A disulfide bridge connects residues Cys130 and Cys131. Ca(2+) contacts are provided by Glu204 and Asn288. Asp330 functions as the Proton acceptor in the catalytic mechanism. A disulfide bond links Cys413 and Cys442.

The protein belongs to the bacterial PQQ dehydrogenase family. As to quaternary structure, heterotetramer composed of 2 alpha and 2 beta subunits. Pyrroloquinoline quinone is required as a cofactor. It depends on Ca(2+) as a cofactor.

It is found in the cell inner membrane. The enzyme catalyses 2 Fe(III)-[cytochrome cL] + a primary alcohol = 2 Fe(II)-[cytochrome cL] + an aldehyde + 2 H(+). Catalyzes the oxidation of primary alcohols including methanol. This chain is Methanol dehydrogenase [cytochrome c] subunit 1 (moxF), found in Methylobacterium organophilum.